The following is a 426-amino-acid chain: Serine--tRNA ligase (426 aa).

Thr233–Glu235 contacts L-serine. Arg264–Glu266 is a binding site for ATP. Residue Glu287 participates in L-serine binding. Glu351–Ser354 serves as a coordination point for ATP. Ser387 serves as a coordination point for L-serine.

This sequence belongs to the class-II aminoacyl-tRNA synthetase family. Type-1 seryl-tRNA synthetase subfamily. In terms of assembly, homodimer. The tRNA molecule binds across the dimer.

It localises to the cytoplasm. It carries out the reaction tRNA(Ser) + L-serine + ATP = L-seryl-tRNA(Ser) + AMP + diphosphate + H(+). The enzyme catalyses tRNA(Sec) + L-serine + ATP = L-seryl-tRNA(Sec) + AMP + diphosphate + H(+). It functions in the pathway aminoacyl-tRNA biosynthesis; selenocysteinyl-tRNA(Sec) biosynthesis; L-seryl-tRNA(Sec) from L-serine and tRNA(Sec): step 1/1. Its function is as follows. Catalyzes the attachment of serine to tRNA(Ser). Is also able to aminoacylate tRNA(Sec) with serine, to form the misacylated tRNA L-seryl-tRNA(Sec), which will be further converted into selenocysteinyl-tRNA(Sec). The protein is Serine--tRNA ligase of Pseudomonas putida (strain ATCC 700007 / DSM 6899 / JCM 31910 / BCRC 17059 / LMG 24140 / F1).